Here is a 295-residue protein sequence, read N- to C-terminus: Acetylglutamate kinase (295 aa).

Residues 61–62, arginine 83, and asparagine 187 contribute to the substrate site; that span reads GG.

Belongs to the acetylglutamate kinase family. ArgB subfamily.

The protein localises to the cytoplasm. The catalysed reaction is N-acetyl-L-glutamate + ATP = N-acetyl-L-glutamyl 5-phosphate + ADP. It functions in the pathway amino-acid biosynthesis; L-arginine biosynthesis; N(2)-acetyl-L-ornithine from L-glutamate: step 2/4. In terms of biological role, catalyzes the ATP-dependent phosphorylation of N-acetyl-L-glutamate. The chain is Acetylglutamate kinase from Methanocorpusculum labreanum (strain ATCC 43576 / DSM 4855 / Z).